The primary structure comprises 209 residues: Probable phosphatase C1687.21 (209 aa).

H8 acts as the Tele-phosphohistidine intermediate in catalysis. The active-site Proton donor/acceptor is E82.

It belongs to the phosphoglycerate mutase family. BPG-dependent PGAM subfamily.

Its subcellular location is the cytoplasm. The protein resides in the nucleus. The chain is Probable phosphatase C1687.21 from Schizosaccharomyces pombe (strain 972 / ATCC 24843) (Fission yeast).